Here is a 330-residue protein sequence, read N- to C-terminus: Tryptophan--tRNA ligase (330 aa).

Residues 10-12 (QPS) and 18-19 (GN) contribute to the ATP site. Residues 11–19 (PSGTLTLGN) carry the 'HIGH' region motif. Asp133 is a binding site for L-tryptophan. ATP contacts are provided by residues 145 to 147 (GED), Ile184, and 193 to 197 (KMSKS). Positions 193–197 (KMSKS) match the 'KMSKS' region motif.

This sequence belongs to the class-I aminoacyl-tRNA synthetase family. Homodimer.

It localises to the cytoplasm. The catalysed reaction is tRNA(Trp) + L-tryptophan + ATP = L-tryptophyl-tRNA(Trp) + AMP + diphosphate + H(+). Functionally, catalyzes the attachment of tryptophan to tRNA(Trp). This Halalkalibacterium halodurans (strain ATCC BAA-125 / DSM 18197 / FERM 7344 / JCM 9153 / C-125) (Bacillus halodurans) protein is Tryptophan--tRNA ligase.